The primary structure comprises 372 residues: Tetraacyldisaccharide 4'-kinase (372 aa).

65–72 contacts ATP; the sequence is TVGGTGKT. The disordered stretch occupies residues 351-372; it reads QSTATGMADGLDKEHQDGQPAA. Residues 360–372 are compositionally biased toward basic and acidic residues; the sequence is GLDKEHQDGQPAA.

Belongs to the LpxK family.

The catalysed reaction is a lipid A disaccharide + ATP = a lipid IVA + ADP + H(+). The protein operates within glycolipid biosynthesis; lipid IV(A) biosynthesis; lipid IV(A) from (3R)-3-hydroxytetradecanoyl-[acyl-carrier-protein] and UDP-N-acetyl-alpha-D-glucosamine: step 6/6. Its function is as follows. Transfers the gamma-phosphate of ATP to the 4'-position of a tetraacyldisaccharide 1-phosphate intermediate (termed DS-1-P) to form tetraacyldisaccharide 1,4'-bis-phosphate (lipid IVA). The chain is Tetraacyldisaccharide 4'-kinase from Cupriavidus metallidurans (strain ATCC 43123 / DSM 2839 / NBRC 102507 / CH34) (Ralstonia metallidurans).